The following is a 321-amino-acid chain: Glycerol-3-phosphate phosphatase (321 aa).

Residue aspartate 34 is the Nucleophile of the active site. Residues aspartate 34, aspartate 36, and aspartate 260 each contribute to the Mg(2+) site. Aspartate 36 acts as the Proton donor in catalysis.

It belongs to the HAD-like hydrolase superfamily. CbbY/CbbZ/Gph/YieH family. In terms of assembly, homodimer. Requires Mg(2+) as cofactor. As to expression, detected in all tissues including red cells, lymphocytes and cultured fibroblasts (at protein level). The highest activities occur in skeletal muscle and cardiac muscle.

The catalysed reaction is O-phospho-L-tyrosyl-[protein] + H2O = L-tyrosyl-[protein] + phosphate. It catalyses the reaction sn-glycerol 1-phosphate + H2O = glycerol + phosphate. The enzyme catalyses sn-glycerol 3-phosphate + H2O = glycerol + phosphate. In terms of biological role, glycerol-3-phosphate phosphatase hydrolyzing glycerol-3-phosphate into glycerol. Thereby, regulates the cellular levels of glycerol-3-phosphate a metabolic intermediate of glucose, lipid and energy metabolism. Was also shown to have a 2-phosphoglycolate phosphatase activity and a tyrosine-protein phosphatase activity. However, their physiological relevance is unclear. In vitro, also has a phosphatase activity toward ADP, ATP, GDP and GTP. The chain is Glycerol-3-phosphate phosphatase from Homo sapiens (Human).